Here is a 535-residue protein sequence, read N- to C-terminus: CTP synthase (535 aa).

Residues 1–267 (MTKYIFVTGG…DQIVCDHLKL (267 aa)) are amidoligase domain. Ser13 contributes to the CTP binding site. Ser13 lines the UTP pocket. 14–19 (SLGKGI) provides a ligand contact to ATP. Residue Tyr54 participates in L-glutamine binding. Position 71 (Asp71) interacts with ATP. 2 residues coordinate Mg(2+): Asp71 and Glu141. CTP-binding positions include 148 to 150 (DIE), 188 to 193 (KTKPTQ), and Lys224. UTP is bound by residues 188–193 (KTKPTQ) and Lys224. 240–242 (RDA) is an ATP binding site. One can recognise a Glutamine amidotransferase type-1 domain in the interval 292–534 (KIALVGKYVE…VRASITNKES (243 aa)). An L-glutamine-binding site is contributed by Gly354. Cys381 serves as the catalytic Nucleophile; for glutamine hydrolysis. L-glutamine contacts are provided by residues 382 to 385 (LGMQ), Glu405, and Arg462. Active-site residues include His507 and Glu509.

This sequence belongs to the CTP synthase family. Homotetramer.

The enzyme catalyses UTP + L-glutamine + ATP + H2O = CTP + L-glutamate + ADP + phosphate + 2 H(+). It catalyses the reaction L-glutamine + H2O = L-glutamate + NH4(+). The catalysed reaction is UTP + NH4(+) + ATP = CTP + ADP + phosphate + 2 H(+). Its pathway is pyrimidine metabolism; CTP biosynthesis via de novo pathway; CTP from UDP: step 2/2. Allosterically activated by GTP, when glutamine is the substrate; GTP has no effect on the reaction when ammonia is the substrate. The allosteric effector GTP functions by stabilizing the protein conformation that binds the tetrahedral intermediate(s) formed during glutamine hydrolysis. Inhibited by the product CTP, via allosteric rather than competitive inhibition. Catalyzes the ATP-dependent amination of UTP to CTP with either L-glutamine or ammonia as the source of nitrogen. Regulates intracellular CTP levels through interactions with the four ribonucleotide triphosphates. In Bacillus cereus (strain ATCC 10987 / NRS 248), this protein is CTP synthase.